A 420-amino-acid polypeptide reads, in one-letter code: Diaminobutyrate--2-oxoglutarate transaminase (420 aa).

Residue Lys-271 is modified to N6-(pyridoxal phosphate)lysine.

This sequence belongs to the class-III pyridoxal-phosphate-dependent aminotransferase family. Pyridoxal 5'-phosphate is required as a cofactor.

The catalysed reaction is L-2,4-diaminobutanoate + 2-oxoglutarate = L-aspartate 4-semialdehyde + L-glutamate. Its pathway is amine and polyamine biosynthesis; ectoine biosynthesis; L-ectoine from L-aspartate 4-semialdehyde: step 1/3. Catalyzes reversively the conversion of L-aspartate beta-semialdehyde (ASA) to L-2,4-diaminobutyrate (DABA) by transamination with L-glutamate. This is Diaminobutyrate--2-oxoglutarate transaminase (ectB) from Streptomyces anulatus (Streptomyces chrysomallus).